We begin with the raw amino-acid sequence, 3034 residues long: Cadherin EGF LAG seven-pass G-type receptor 1 (3034 aa).

A signal peptide spans 1–29 (MAPSSPRVLPALVLLAAAALPALELGAAA). At 30 to 2484 (WELRVPGGAR…REHGEVLPLK (2455 aa)) the chain is on the extracellular side. Residues 222-243 (GTPSESPSVSPSLLNLSQPRAG) show a composition bias toward low complexity. A disordered region spans residues 222-267 (GTPSESPSVSPSLLNLSQPRAGVVRRSRRGTGSSTSPQFPLPSYQV). Residue Asn-236 is glycosylated (N-linked (GlcNAc...) asparagine). Cadherin domains lie at 261-368 (PLPS…SPVF), 369-474 (EQSE…YPQF), 475-580 (SEKR…APIF), 581-702 (VSSP…DPMF), 703-804 (TQPV…RPVF), 805-907 (QSSH…APRF), 908-1014 (LRDF…PPVF), 1015-1116 (EKDE…PPEL), and 1121-1239 (ILFN…SPLL). 3 N-linked (GlcNAc...) asparagine glycosylation sites follow: Asn-561, Asn-649, and Asn-793. 6 N-linked (GlcNAc...) asparagine glycosylation sites follow: Asn-1129, Asn-1154, Asn-1228, Asn-1264, Asn-1274, and Asn-1302. Positions 1318-1376 (DDNICLREPCENYMKCVSVLRFDSSAPFISSTTVLFRPIHPITGLRCRCPPGFTGDYCE) constitute an EGF-like 1; calcium-binding domain. Intrachain disulfides connect Cys-1322–Cys-1333, Cys-1327–Cys-1364, Cys-1366–Cys-1375, Cys-1382–Cys-1393, Cys-1387–Cys-1402, Cys-1404–Cys-1413, Cys-1422–Cys-1433, Cys-1427–Cys-1443, and Cys-1445–Cys-1455. The EGF-like 2; calcium-binding domain occupies 1378–1414 (EIDLCYSNPCGANGRCRSREGGYTCECFEDFTGEHCQ). In terms of domain architecture, EGF-like 3; calcium-binding spans 1418–1456 (RSGRCASGVCKNGGTCVNLLIGGFHCVCPPGEYEHPYCE). The 205-residue stretch at 1457-1661 (VSTRSFPPQS…IANNGTRAGC (205 aa)) folds into the Laminin G-like 1 domain. 3 N-linked (GlcNAc...) asparagine glycosylation sites follow: Asn-1591, Asn-1638, and Asn-1655. Cystine bridges form between Cys-1635–Cys-1661, Cys-1668–Cys-1679, Cys-1673–Cys-1688, Cys-1690–Cys-1699, Cys-1855–Cys-1885, Cys-1891–Cys-1902, Cys-1896–Cys-1911, Cys-1913–Cys-1922, Cys-1926–Cys-1937, Cys-1931–Cys-1949, Cys-1951–Cys-1960, Cys-1968–Cys-1981, and Cys-1983–Cys-1993. The EGF-like 4; calcium-binding domain maps to 1664-1700 (QRNFCDGTSCQNGGTCVNRWNTYLCECPLRFGGKNCE). At Asn-1681 the chain carries (3R)-3-hydroxyasparagine. Residues 1704–1885 (PHPQRFTGES…ALKVRVKDGC (182 aa)) form the Laminin G-like 2 domain. Positions 1887 to 1922 (VEDPCASSPCPPHSHCRDTWDSYSCICDRGYFGKKC) constitute an EGF-like 5; calcium-binding domain. The residue at position 1904 (Asp-1904) is a (3R)-3-hydroxyaspartate. An EGF-like 6; calcium-binding domain is found at 1923–1961 (VDACLLNPCKHVAACVRSPNTPRGYSCECGPGHYGQYCE). Residues 1962-1994 (NKVDLPCPKGWWGNPVCGPCHCAVSQGFDPDCN) form the EGF-like 7; calcium-binding domain. Asn-1994 carries N-linked (GlcNAc...) asparagine glycosylation. The 36-residue stretch at 1996 to 2031 (TNGQCQCKENYYKPPAQDACLPCDCFPHGSHSRACD) folds into the EGF-like 8; calcium-binding domain. Cystine bridges form between Cys-2000-Cys-2015, Cys-2002-Cys-2018, Cys-2020-Cys-2030, Cys-2039-Cys-2048, and Cys-2051-Cys-2063. Positions 2018-2065 (CDCFPHGSHSRACDMDTGQCACKPGVIGRQCNRCDNPFAEVTSLGCEV) constitute a Laminin EGF-like domain. N-linked (GlcNAc...) asparagine glycosylation is found at Asn-2118, Asn-2137, Asn-2144, Asn-2155, Asn-2160, and Asn-2272. The interval 2295–2346 (SVSFPADTFKPPEKKEGPVVRLTNRRTTPLTAQPEPRAERETSSSRRRRHPD) is disordered. In terms of domain architecture, GAIN-B spans 2312–2476 (PVVRLTNRRT…AVLMDISRRE (165 aa)). 2 disulfides stabilise this stretch: Cys-2426–Cys-2458 and Cys-2446–Cys-2460. The segment at 2426-2476 (CVFWNHSLDTGGTGGWSAKGCELLSRNRTHVTCQCSHSASCAVLMDISRRE) is GPS. N-linked (GlcNAc...) asparagine glycans are attached at residues Asn-2430 and Asn-2452. Residues 2485-2505 (IITYAALSLSLVALLVAFVLL) form a helical membrane-spanning segment. The Cytoplasmic segment spans residues 2506 to 2516 (SLVRTLRSNLH). Residues 2517 to 2537 (SIHKNLITALFFSQLIFMVGI) form a helical membrane-spanning segment. Asn-2538 carries N-linked (GlcNAc...) asparagine glycosylation. Residues 2538–2542 (NQTEN) are Extracellular-facing. A helical transmembrane segment spans residues 2543–2563 (PFLCTVVAILLHYVSMGTFAW). The Cytoplasmic portion of the chain corresponds to 2564-2587 (TLVENLHVYRMLTEVRNIDTGPMR). The chain crosses the membrane as a helical span at residues 2588-2608 (FYHVVGWGIPAIVTGLAVGLD). Topologically, residues 2609 to 2625 (PQGYGNPDFCWLSLQDT) are extracellular. A helical membrane pass occupies residues 2626 to 2646 (LIWSFAGPVGTVIIINTVIFV). Topologically, residues 2647–2670 (LSAKVSCQRKHHYYERKGVVSMLR) are cytoplasmic. Residues 2671–2691 (TAFLLLLLVTATWLLGLLAVN) traverse the membrane as a helical segment. The Extracellular portion of the chain corresponds to 2692–2694 (SDT). The helical transmembrane segment at 2695–2715 (LSFHYLFAAFSCLQGIFVLLF) threads the bilayer. Topologically, residues 2716-3034 (HCVAHREVRK…QANGSDSEKP (319 aa)) are cytoplasmic. Residues 2774 to 3034 (TASLDSTTRD…QANGSDSEKP (261 aa)) are disordered. Residues Ser-2776, Ser-2779, Ser-2886, and Ser-2888 each carry the phosphoserine modification. The span at 2893 to 2909 (TEPHLKVETKVSVELHR) shows a compositional bias: basic and acidic residues. The span at 2976–2986 (SPTSSRTSSLG) shows a compositional bias: low complexity. Residues 3003–3012 (PRREPGREHL) are compositionally biased toward basic and acidic residues. The span at 3020 to 3034 (RTGSAQANGSDSEKP) shows a compositional bias: polar residues.

Belongs to the G-protein coupled receptor 2 family. LN-TM7 subfamily. In terms of processing, the iron and 2-oxoglutarate dependent 3-hydroxylation of aspartate and asparagine is (R) stereospecific within EGF domains. In terms of tissue distribution, expressed in the brain, where it is localized principally in the ependymal cell layer, choroid plexus and the area postrema. Also found in spinal cord and in the eye.

It is found in the cell membrane. Its function is as follows. Receptor that may have an important role in cell/cell signaling during nervous system formation. The polypeptide is Cadherin EGF LAG seven-pass G-type receptor 1 (Celsr1) (Mus musculus (Mouse)).